A 443-amino-acid polypeptide reads, in one-letter code: Xaa-Pro dipeptidase (443 aa).

Asp246, Asp257, His339, Glu384, and Glu423 together coordinate Mn(2+).

It belongs to the peptidase M24B family. Bacterial-type prolidase subfamily. The cofactor is Mn(2+).

It carries out the reaction Xaa-L-Pro dipeptide + H2O = an L-alpha-amino acid + L-proline. Splits dipeptides with a prolyl residue in the C-terminal position. The chain is Xaa-Pro dipeptidase from Serratia proteamaculans (strain 568).